Reading from the N-terminus, the 327-residue chain is Lipoyl synthase (327 aa).

Residues cysteine 72, cysteine 77, cysteine 83, cysteine 98, cysteine 102, cysteine 105, and serine 313 each contribute to the [4Fe-4S] cluster site. The 220-residue stretch at 83-302 folds into the Radical SAM core domain; it reads CWSHGTATIM…RKVGLEKGFL (220 aa).

The protein belongs to the radical SAM superfamily. Lipoyl synthase family. [4Fe-4S] cluster serves as cofactor.

Its subcellular location is the cytoplasm. The enzyme catalyses [[Fe-S] cluster scaffold protein carrying a second [4Fe-4S](2+) cluster] + N(6)-octanoyl-L-lysyl-[protein] + 2 oxidized [2Fe-2S]-[ferredoxin] + 2 S-adenosyl-L-methionine + 4 H(+) = [[Fe-S] cluster scaffold protein] + N(6)-[(R)-dihydrolipoyl]-L-lysyl-[protein] + 4 Fe(3+) + 2 hydrogen sulfide + 2 5'-deoxyadenosine + 2 L-methionine + 2 reduced [2Fe-2S]-[ferredoxin]. It functions in the pathway protein modification; protein lipoylation via endogenous pathway; protein N(6)-(lipoyl)lysine from octanoyl-[acyl-carrier-protein]: step 2/2. Its function is as follows. Catalyzes the radical-mediated insertion of two sulfur atoms into the C-6 and C-8 positions of the octanoyl moiety bound to the lipoyl domains of lipoate-dependent enzymes, thereby converting the octanoylated domains into lipoylated derivatives. The chain is Lipoyl synthase from Francisella tularensis subsp. novicida (strain U112).